The chain runs to 1358 residues: DNA-directed RNA polymerase subunit beta (1358 aa).

It belongs to the RNA polymerase beta chain family. In terms of assembly, the RNAP catalytic core consists of 2 alpha, 1 beta, 1 beta' and 1 omega subunit. When a sigma factor is associated with the core the holoenzyme is formed, which can initiate transcription.

It carries out the reaction RNA(n) + a ribonucleoside 5'-triphosphate = RNA(n+1) + diphosphate. Functionally, DNA-dependent RNA polymerase catalyzes the transcription of DNA into RNA using the four ribonucleoside triphosphates as substrates. The protein is DNA-directed RNA polymerase subunit beta of Francisella tularensis subsp. novicida (strain U112).